The primary structure comprises 321 residues: Lipoyl synthase (321 aa).

Positions 68, 73, 79, 94, 98, 101, and 308 each coordinate [4Fe-4S] cluster. The Radical SAM core domain maps to 80–297 (FNHGTATFMI…KAEAMAMGFT (218 aa)).

This sequence belongs to the radical SAM superfamily. Lipoyl synthase family. [4Fe-4S] cluster is required as a cofactor.

The protein localises to the cytoplasm. The catalysed reaction is [[Fe-S] cluster scaffold protein carrying a second [4Fe-4S](2+) cluster] + N(6)-octanoyl-L-lysyl-[protein] + 2 oxidized [2Fe-2S]-[ferredoxin] + 2 S-adenosyl-L-methionine + 4 H(+) = [[Fe-S] cluster scaffold protein] + N(6)-[(R)-dihydrolipoyl]-L-lysyl-[protein] + 4 Fe(3+) + 2 hydrogen sulfide + 2 5'-deoxyadenosine + 2 L-methionine + 2 reduced [2Fe-2S]-[ferredoxin]. It participates in protein modification; protein lipoylation via endogenous pathway; protein N(6)-(lipoyl)lysine from octanoyl-[acyl-carrier-protein]: step 2/2. Catalyzes the radical-mediated insertion of two sulfur atoms into the C-6 and C-8 positions of the octanoyl moiety bound to the lipoyl domains of lipoate-dependent enzymes, thereby converting the octanoylated domains into lipoylated derivatives. This is Lipoyl synthase from Klebsiella pneumoniae (strain 342).